The sequence spans 1118 residues: Protein SUPPRESSOR OF NPR1-1 CONSTITUTIVE 4 (1118 aa).

The first 35 residues, 1-35 (MNSQQSTRTKQMLQQSSTHLLCGVVLLQLFAAQVD), serve as a signal peptide directing secretion. Residues 36–751 (AQRSTSPWQT…PLRNFLKVIR (716 aa)) lie on the Extracellular side of the membrane. A GP-PDE 1 domain is found at 51-353 (PLVIARGGFS…DFPLTASASV (303 aa)). N-linked (GlcNAc...) asparagine glycans are attached at residues N106, N195, N251, N260, N318, N335, N362, N422, N433, N497, N557, N573, and N656. Residues 369 to 670 (FLVISKNGAS…EFPYTAARYK (302 aa)) enclose the GP-PDE 2 domain. The chain crosses the membrane as a helical span at residues 752 to 772 (IVSWSVAGVVLFLVLLTLVFC). Residues 773-1118 (FHRKRETRLR…SEDVSVYTEG (346 aa)) are Cytoplasmic-facing. In terms of domain architecture, Protein kinase spans 805 to 1094 (KSFAEVVGRG…ALEVPPRPVL (290 aa)). ATP-binding positions include 811 to 819 (VGRGGFGIV) and K833. D928 acts as the Proton acceptor in catalysis.

This sequence in the N-terminal section; belongs to the glycerophosphoryl diester phosphodiesterase family. In the C-terminal section; belongs to the protein kinase superfamily. Ser/Thr protein kinase family. In terms of tissue distribution, expressed in shoots, rosette and cauline leaves, stems, flowers and siliques.

The protein resides in the cell membrane. The enzyme catalyses a sn-glycero-3-phosphodiester + H2O = an alcohol + sn-glycerol 3-phosphate + H(+). It catalyses the reaction L-seryl-[protein] + ATP = O-phospho-L-seryl-[protein] + ADP + H(+). It carries out the reaction L-threonyl-[protein] + ATP = O-phospho-L-threonyl-[protein] + ADP + H(+). Functionally, atypical receptor-like kinase involved in disease resistance. The chain is Protein SUPPRESSOR OF NPR1-1 CONSTITUTIVE 4 from Arabidopsis thaliana (Mouse-ear cress).